A 149-amino-acid polypeptide reads, in one-letter code: Large ribosomal subunit protein uL13 (149 aa).

Belongs to the universal ribosomal protein uL13 family. Part of the 50S ribosomal subunit.

Functionally, this protein is one of the early assembly proteins of the 50S ribosomal subunit, although it is not seen to bind rRNA by itself. It is important during the early stages of 50S assembly. The protein is Large ribosomal subunit protein uL13 of Bifidobacterium longum subsp. infantis (strain ATCC 15697 / DSM 20088 / JCM 1222 / NCTC 11817 / S12).